A 437-amino-acid chain; its full sequence is Elongation factor 1-gamma (437 aa).

N-acetylalanine is present on A2. Residues 2-87 (AAGTLYTYPE…YVSNEELRGS (86 aa)) form the GST N-terminal domain. Residues 88 to 216 (TPEAAAQVVQ…VKLCEKMAQF (129 aa)) enclose the GST C-terminal domain. 2 positions are modified to N6-acetyllysine: K147 and K212. Basic and acidic residues predominate over residues 221 to 254 (FAESQPKKDTPRKEKGSREEKQKPQAERKEEKKA). Residues 221-268 (FAESQPKKDTPRKEKGSREEKQKPQAERKEEKKAAAPAPEEEMDECEQ) form a disordered region. K253 participates in a covalent cross-link: Glycyl lysine isopeptide (Lys-Gly) (interchain with G-Cter in SUMO1). The 162-residue stretch at 276–437 (AKDPFAHLPK…KAFNQGKIFK (162 aa)) folds into the EF-1-gamma C-terminal domain. K285 participates in a covalent cross-link: Glycyl lysine isopeptide (Lys-Gly) (interchain with G-Cter in SUMO2). The residue at position 401 (K401) is an N6-acetyllysine. The residue at position 434 (K434) is an N6-acetyllysine; alternate. K434 carries the post-translational modification N6-malonyllysine; alternate.

As to quaternary structure, EF-1 is composed of four subunits: alpha, beta, delta, and gamma.

Probably plays a role in anchoring the complex to other cellular components. This chain is Elongation factor 1-gamma (EEF1G), found in Equus caballus (Horse).